A 190-amino-acid chain; its full sequence is Cytidylate kinase (190 aa).

7 to 15 (GKIGSGKST) lines the ATP pocket.

It belongs to the cytidylate kinase family. Type 2 subfamily.

It localises to the cytoplasm. The catalysed reaction is CMP + ATP = CDP + ADP. The enzyme catalyses dCMP + ATP = dCDP + ADP. In Thermoplasma volcanium (strain ATCC 51530 / DSM 4299 / JCM 9571 / NBRC 15438 / GSS1), this protein is Cytidylate kinase.